The primary structure comprises 239 residues: MGQKINPLGFRLGTTQKHHSFWFAQPKNYSEGLQEDKKIRDCIKNYIQKNRKKGSNRKIESDSSSEVITHNRKMDSGSSSEVITHIEIQKEIDTIHVIIHIGFPNLLKKKGAIEELEKDLQKEINSVNQRFNISIEKVKEPYRQPNILAEYIAFQLKNRVSFRKAMKKAIELTKKADIRGVKVKIAGRLGGKEIARAESIKRGRLPLQTIRAKIDYCCYPIRTIYGVLGVKIWIFVDEE.

In terms of domain architecture, KH type-2 spans 43 to 139 (IKNYIQKNRK…RFNISIEKVK (97 aa)). Positions 50–74 (NRKKGSNRKIESDSSSEVITHNRKM) are disordered.

The protein belongs to the universal ribosomal protein uS3 family. In terms of assembly, part of the 30S ribosomal subunit.

The protein resides in the plastid. The protein localises to the chloroplast. This is Small ribosomal subunit protein uS3c (rps3) from Hordeum vulgare (Barley).